Here is a 146-residue protein sequence, read N- to C-terminus: D-aminoacyl-tRNA deacylase (146 aa).

The short motif at 137–138 is the Gly-cisPro motif, important for rejection of L-amino acids element; the sequence is GP.

Belongs to the DTD family. As to quaternary structure, homodimer.

The protein localises to the cytoplasm. It catalyses the reaction glycyl-tRNA(Ala) + H2O = tRNA(Ala) + glycine + H(+). The enzyme catalyses a D-aminoacyl-tRNA + H2O = a tRNA + a D-alpha-amino acid + H(+). In terms of biological role, an aminoacyl-tRNA editing enzyme that deacylates mischarged D-aminoacyl-tRNAs. Also deacylates mischarged glycyl-tRNA(Ala), protecting cells against glycine mischarging by AlaRS. Acts via tRNA-based rather than protein-based catalysis; rejects L-amino acids rather than detecting D-amino acids in the active site. By recycling D-aminoacyl-tRNA to D-amino acids and free tRNA molecules, this enzyme counteracts the toxicity associated with the formation of D-aminoacyl-tRNA entities in vivo and helps enforce protein L-homochirality. This is D-aminoacyl-tRNA deacylase from Anoxybacillus flavithermus (strain DSM 21510 / WK1).